The following is a 582-amino-acid chain: Threonine--tRNA ligase (582 aa).

The catalytic stretch occupies residues 185 to 478 (DHRKLGKELE…LTEQYGGAFP (294 aa)). Zn(2+) contacts are provided by Cys-278, His-329, and His-455.

Belongs to the class-II aminoacyl-tRNA synthetase family. As to quaternary structure, homodimer. Zn(2+) serves as cofactor.

It localises to the cytoplasm. The enzyme catalyses tRNA(Thr) + L-threonine + ATP = L-threonyl-tRNA(Thr) + AMP + diphosphate + H(+). In terms of biological role, catalyzes the attachment of threonine to tRNA(Thr) in a two-step reaction: L-threonine is first activated by ATP to form Thr-AMP and then transferred to the acceptor end of tRNA(Thr). Also edits incorrectly charged L-seryl-tRNA(Thr). The sequence is that of Threonine--tRNA ligase from Dehalococcoides mccartyi (strain CBDB1).